The following is a 959-amino-acid chain: Lon protease homolog, mitochondrial (959 aa).

A mitochondrion-targeting transit peptide spans 1 to 67 (MAASTGYVRL…GPAIGGQWRG (67 aa)). 2 disordered regions span residues 77-102 (GAFS…GSAG) and 218-257 (RQLE…HPAE). Residues 91–102 (EEGAGGAGGSAG) are compositionally biased toward gly residues. The Lon N-terminal domain occupies 124–370 (LPLIAITRNP…KALSLLKKEF (247 aa)). Residues 233–243 (HKPRRKSKRGK) show a composition bias toward basic residues. Residues 244 to 256 (KEAEDELSARHPA) show a composition bias toward basic and acidic residues. 523-530 (GPPGVGKT) lines the ATP pocket. The Lon proteolytic domain maps to 759 to 949 (VTPPGVVMGL…REIFDIAFPD (191 aa)). Residues Ser855 and Lys898 contribute to the active site.

It belongs to the peptidase S16 family. Homohexamer. Organized in a ring with a central cavity. The ATP-binding and proteolytic domains (AP-domain) form a hexameric chamber, while the N-terminal domain is arranged as a trimer of dimers. DNA and RNA binding is stimulated by substrate and inhibited by ATP binding. Interacts with TWNK and mitochondrial DNA polymerase subunit POLG. In terms of tissue distribution, duodenum, heart, lung and liver, but not thymus.

It localises to the mitochondrion matrix. It carries out the reaction Hydrolysis of proteins in presence of ATP.. With respect to regulation, peptidase activity is subject to substrate inhibition by ATP. Functionally, ATP-dependent serine protease that mediates the selective degradation of misfolded, unassembled or oxidatively damaged polypeptides as well as certain short-lived regulatory proteins in the mitochondrial matrix. Endogenous substrates include mitochondrial steroidogenic acute regulatory (StAR) protein, DELE1, helicase Twinkle (TWNK) and the large ribosomal subunit protein MRPL32/bL32m. MRPL32/bL32m is protected from degradation by LONP1 when it is bound to a nucleic acid (RNA), but TWNK is not. May also have a chaperone function in the assembly of inner membrane protein complexes. Participates in the regulation of mitochondrial gene expression and in the maintenance of the integrity of the mitochondrial genome. Binds to mitochondrial promoters and RNA in a single-stranded, site-specific, and strand-specific manner. May regulate mitochondrial DNA replication and/or gene expression using site-specific, single-stranded DNA binding to target the degradation of regulatory proteins binding to adjacent sites in mitochondrial promoters. This is Lon protease homolog, mitochondrial from Homo sapiens (Human).